We begin with the raw amino-acid sequence, 456 residues long: Enolase (456 aa).

A (2R)-2-phosphoglycerate-binding site is contributed by Q164. The active-site Proton donor is the E207. The Mg(2+) site is built by D244, E287, and D314. 4 residues coordinate (2R)-2-phosphoglycerate: K339, R368, S369, and K390. The active-site Proton acceptor is the K339.

Belongs to the enolase family. Component of the RNA degradosome, a multiprotein complex involved in RNA processing and mRNA degradation. Requires Mg(2+) as cofactor.

The protein localises to the cytoplasm. Its subcellular location is the secreted. The protein resides in the cell surface. The enzyme catalyses (2R)-2-phosphoglycerate = phosphoenolpyruvate + H2O. The protein operates within carbohydrate degradation; glycolysis; pyruvate from D-glyceraldehyde 3-phosphate: step 4/5. Functionally, catalyzes the reversible conversion of 2-phosphoglycerate (2-PG) into phosphoenolpyruvate (PEP). It is essential for the degradation of carbohydrates via glycolysis. This Francisella tularensis subsp. holarctica (strain OSU18) protein is Enolase.